Consider the following 266-residue polypeptide: 3-deoxy-manno-octulosonate cytidylyltransferase 1 (266 aa).

Belongs to the KdsB family.

The protein resides in the cytoplasm. The enzyme catalyses 3-deoxy-alpha-D-manno-oct-2-ulosonate + CTP = CMP-3-deoxy-beta-D-manno-octulosonate + diphosphate. Its pathway is nucleotide-sugar biosynthesis; CMP-3-deoxy-D-manno-octulosonate biosynthesis; CMP-3-deoxy-D-manno-octulosonate from 3-deoxy-D-manno-octulosonate and CTP: step 1/1. It participates in bacterial outer membrane biogenesis; lipopolysaccharide biosynthesis. Functionally, activates KDO (a required 8-carbon sugar) for incorporation into bacterial lipopolysaccharide in Gram-negative bacteria. The polypeptide is 3-deoxy-manno-octulosonate cytidylyltransferase 1 (Paraburkholderia phytofirmans (strain DSM 17436 / LMG 22146 / PsJN) (Burkholderia phytofirmans)).